Here is a 483-residue protein sequence, read N- to C-terminus: Glutamyl-tRNA(Gln) amidotransferase subunit A (483 aa).

Active-site charge relay system residues include Lys-76 and Ser-151. Ser-175 functions as the Acyl-ester intermediate in the catalytic mechanism.

This sequence belongs to the amidase family. GatA subfamily. Heterotrimer of A, B and C subunits.

It carries out the reaction L-glutamyl-tRNA(Gln) + L-glutamine + ATP + H2O = L-glutaminyl-tRNA(Gln) + L-glutamate + ADP + phosphate + H(+). In terms of biological role, allows the formation of correctly charged Gln-tRNA(Gln) through the transamidation of misacylated Glu-tRNA(Gln) in organisms which lack glutaminyl-tRNA synthetase. The reaction takes place in the presence of glutamine and ATP through an activated gamma-phospho-Glu-tRNA(Gln). The sequence is that of Glutamyl-tRNA(Gln) amidotransferase subunit A from Ectopseudomonas mendocina (strain ymp) (Pseudomonas mendocina).